Reading from the N-terminus, the 117-residue chain is Putative membrane protein insertion efficiency factor (117 aa).

This sequence belongs to the UPF0161 family.

It is found in the cell inner membrane. Could be involved in insertion of integral membrane proteins into the membrane. The chain is Putative membrane protein insertion efficiency factor from Helicobacter pylori (strain ATCC 700392 / 26695) (Campylobacter pylori).